Reading from the N-terminus, the 386-residue chain is Hemagglutinin-esterase (386 aa).

The signal sequence occupies residues 1 to 11 (MLIIFLFFYFC). Residues 1–121 (MLIIFLFFYF…SNDVWLLNKV (121 aa)) form an esterase domain 1 region. The Virion surface portion of the chain corresponds to 12–359 (YGFNEPLNVV…PICVYDFLPI (348 aa)). The active-site Nucleophile is the Ser-34. Cys-38 and Cys-59 are disulfide-bonded. Asn-83, Asn-110, Asn-145, and Asn-168 each carry an N-linked (GlcNAc...) asparagine; by host glycan. Cys-107 and Cys-154 are oxidised to a cystine. The tract at residues 122-236 (RFYRALYSNM…GSYKVSTTAP (115 aa)) is receptor binding. 3 cysteine pairs are disulfide-bonded: Cys-180-Cys-246, Cys-188-Cys-219, and Cys-277-Cys-282. The interval 237–349 (FLSLPTKALC…RCPTSSIIKH (113 aa)) is esterase domain 2. A glycan (N-linked (GlcNAc...) asparagine; by host) is linked at Asn-286. Active-site charge relay system residues include Asp-296 and His-299. A disulfide bond links Cys-317 and Cys-341. A glycan (N-linked (GlcNAc...) asparagine; by host) is linked at Asn-328. A helical membrane pass occupies residues 360–380 (ILQGILLCLALLFVVFLLFLL). The Intravirion segment spans residues 381–386 (YNDKSH).

It belongs to the influenza type C/coronaviruses hemagglutinin-esterase family. As to quaternary structure, homodimer; disulfide-linked. Forms a complex with the M protein in the pre-Golgi. Associates then with S-M complex to form a ternary complex S-M-HE. N-glycosylated in the host RER.

Its subcellular location is the virion membrane. The protein localises to the host cell membrane. It catalyses the reaction N-acetyl-9-O-acetylneuraminate + H2O = N-acetylneuraminate + acetate + H(+). The enzyme catalyses N-acetyl-4-O-acetylneuraminate + H2O = N-acetylneuraminate + acetate + H(+). In terms of biological role, structural protein that makes short spikes at the surface of the virus. Contains receptor binding and receptor-destroying activities. Mediates de-O-acetylation of N-acetyl-4-O-acetylneuraminic acid, which is probably the receptor determinant recognized by the virus on the surface of erythrocytes and susceptible cells. This receptor-destroying activity is important for virus release as it probably helps preventing self-aggregation and ensures the efficient spread of the progeny virus from cell to cell. May serve as a secondary viral attachment protein for initiating infection, the spike protein being the major one. May become a target for both the humoral and the cellular branches of the immune system. The polypeptide is Hemagglutinin-esterase (Homo sapiens (Human)).